The following is a 249-amino-acid chain: 5'-nucleotidase SurE (249 aa).

A divalent metal cation contacts are provided by aspartate 8, aspartate 9, serine 39, and asparagine 91.

Belongs to the SurE nucleotidase family. The cofactor is a divalent metal cation.

Its subcellular location is the cytoplasm. It carries out the reaction a ribonucleoside 5'-phosphate + H2O = a ribonucleoside + phosphate. In terms of biological role, nucleotidase that shows phosphatase activity on nucleoside 5'-monophosphates. The polypeptide is 5'-nucleotidase SurE (Stutzerimonas stutzeri (strain A1501) (Pseudomonas stutzeri)).